A 324-amino-acid polypeptide reads, in one-letter code: D-alanine--D-alanine ligase (324 aa).

The region spanning 121–321 (NQYLKAFGVR…IKDVMTDIIE (201 aa)) is the ATP-grasp domain. An ATP-binding site is contributed by 149-204 (VEKIGLPCFIKPNLGGSSFGVTKVKTREQIQPAIAKAFSEAEEVMIEAFMGGTELT). Residues Asp275, Glu288, and Asn290 each contribute to the Mg(2+) site.

This sequence belongs to the D-alanine--D-alanine ligase family. Mg(2+) is required as a cofactor. Requires Mn(2+) as cofactor.

The protein resides in the cytoplasm. The catalysed reaction is 2 D-alanine + ATP = D-alanyl-D-alanine + ADP + phosphate + H(+). It participates in cell wall biogenesis; peptidoglycan biosynthesis. Cell wall formation. In Bacteroides fragilis (strain ATCC 25285 / DSM 2151 / CCUG 4856 / JCM 11019 / LMG 10263 / NCTC 9343 / Onslow / VPI 2553 / EN-2), this protein is D-alanine--D-alanine ligase.